Here is a 184-residue protein sequence, read N- to C-terminus: Cysteine-rich atrial secretory protein (184 aa).

Residues 1 to 26 (MATFQAHFFAAVMCVGVLGLSKLCGA) form the signal peptide. 5 disulfide bridges follow: Cys29-Cys34, Cys65-Cys111, Cys75-Cys82, Cys123-Cys155, and Cys135-Cys144. Asn74 carries N-linked (GlcNAc...) asparagine glycosylation.

N-glycosylated. In terms of tissue distribution, highly expressed in atrium. Moderately expressed in the pericardium, pulmonary vein, nephridium, arteria anterior, ovotestis and connective tissue. Low expression found in intestine, lung plexus, diaphragm, subesophageal ganglion, ventricle and digestive gland. Very low expression found in columellar retractor, pedal nerves and cerebral ganglion. Not expressed in hemocytes.

It is found in the secreted. This is Cysteine-rich atrial secretory protein from Achatina achatina (Giant Ghana snail).